The following is a 297-amino-acid chain: Cyclin-dependent kinase 1 (297 aa).

Residues 4–293 (YQKVEKIGEG…AKRALQQNYL (290 aa)) form the Protein kinase domain. Residues 10–18 (IGEGTYGVV) and K33 each bind ATP. T14 carries the post-translational modification Phosphothreonine. Y15 is subject to Phosphotyrosine. D134 functions as the Proton acceptor in the catalytic mechanism. A Phosphothreonine modification is found at T167.

This sequence belongs to the protein kinase superfamily. CMGC Ser/Thr protein kinase family. CDC2/CDKX subfamily. In terms of assembly, forms a stable but non-covalent complex with regulatory subunit suc1 and with a cyclin. Interacts with cyclin cdc13. Interacts with cyclin cig2. Interacts with cdc37.

It is found in the cytoplasm. The catalysed reaction is L-seryl-[protein] + ATP = O-phospho-L-seryl-[protein] + ADP + H(+). The enzyme catalyses L-threonyl-[protein] + ATP = O-phospho-L-threonyl-[protein] + ADP + H(+). With respect to regulation, phosphorylation at Thr-14 or Tyr-15 inactivates the enzyme, while phosphorylation at Thr-167 activates it. Cyclin-dependent kinase that acts as a master regulator of the mitotic and meiotic cell cycles. Required to drive the G1-S and G2-M transitions, and initiation of premeiotic DNA replication and meiosis II. More than 200 substrates have been identified. Substrate specificity is in part regulated by the bound cyclin protein. When complexed with cyclin cig2, it drives the G1-S phase transition. When complexed with cyclin cdc13, it drives the G2-M transition and initiation of meiosis II. Its activity rises throughout the cell cycle and substrate specificity is further influenced by activity thresholds with more sensitive substrates phosphorylated earlier in the cell cycle than less sensitive substrates. Phosphorylates dis1 during metaphase to ensure proper microtubule dynamics and accurate chromosome segregation. Phosphorylates the repetitive C-terminus of the large subunit of RNA polymerase II rpb1. Inactivated by checkpoint signaling following detection of cellular damage, leading to cell cycle arrest to allow damage repair. Inactivated during G2 DNA damage checkpoint signaling. Inactivated in response to defective RNA splicing. The polypeptide is Cyclin-dependent kinase 1 (Schizosaccharomyces pombe (strain 972 / ATCC 24843) (Fission yeast)).